Reading from the N-terminus, the 136-residue chain is Interleukin-13 (136 aa).

The first 18 residues, 1 to 18 (MALWLTVVIAFTCIGGLA), serve as a signal peptide directing secretion. 6 N-linked (GlcNAc...) asparagine glycosylation sites follow: Asn38, Asn49, Asn57, Asn72, Asn75, and Asn131. 2 disulfide bridges follow: Cys48–Cys76 and Cys64–Cys90.

This sequence belongs to the IL-4/IL-13 family. In terms of assembly, interacts with IL13RA2.

It localises to the secreted. Its function is as follows. Cytokine that plays important roles in allergic inflammation and immune response to parasite infection. Synergizes with IL2 in regulating interferon-gamma synthesis. Stimulates B-cell proliferation, and activation of eosinophils, basophils, and mast cells. Plays an important role in controlling IL33 activity by modulating the production of transmembrane and soluble forms of interleukin-1 receptor-like 1/IL1RL1. Displays the capacity to antagonize Th1-driven proinflammatory immune response and downregulates synthesis of many proinflammatory cytokines including IL1, IL6, IL10, IL12 and TNF-alpha through a mechanism that partially involves suppression of NF-kappa-B. Also functions on nonhematopoietic cells, including endothelial cells where it induces vascular cell adhesion protein 1/VCAM1, which is important in the recruitment of eosinophils. Exerts its biological effects through its receptors which comprises the IL4R chain and the IL13RA1 chain, to activate JAK1 and TYK2, leading to the activation of STAT6. Aside from IL13RA1, another receptor IL13RA2 acts as a high affinity decoy for IL13 and mediates internalization and depletion of extracellular IL13. The polypeptide is Interleukin-13 (IL13) (Camelus bactrianus (Bactrian camel)).